Here is a 508-residue protein sequence, read N- to C-terminus: Light-independent protochlorophyllide reductase subunit B (508 aa).

Asp36 serves as a coordination point for [4Fe-4S] cluster. The active-site Proton donor is Asp282. Position 417–418 (417–418 (GL)) interacts with substrate.

It belongs to the ChlB/BchB/BchZ family. As to quaternary structure, protochlorophyllide reductase is composed of three subunits; BchL, BchN and BchB. Forms a heterotetramer of two BchB and two BchN subunits. [4Fe-4S] cluster serves as cofactor.

The catalysed reaction is chlorophyllide a + oxidized 2[4Fe-4S]-[ferredoxin] + 2 ADP + 2 phosphate = protochlorophyllide a + reduced 2[4Fe-4S]-[ferredoxin] + 2 ATP + 2 H2O. Its pathway is porphyrin-containing compound metabolism; bacteriochlorophyll biosynthesis (light-independent). In terms of biological role, component of the dark-operative protochlorophyllide reductase (DPOR) that uses Mg-ATP and reduced ferredoxin to reduce ring D of protochlorophyllide (Pchlide) to form chlorophyllide a (Chlide). This reaction is light-independent. The NB-protein (BchN-BchB) is the catalytic component of the complex. This chain is Light-independent protochlorophyllide reductase subunit B, found in Methylocella silvestris (strain DSM 15510 / CIP 108128 / LMG 27833 / NCIMB 13906 / BL2).